We begin with the raw amino-acid sequence, 147 residues long: 18 kDa antigen 1 (147 aa).

Positions 21-131 constitute a sHSP domain; the sequence is TPTRPAVMPM…RPRKIAVGAA (111 aa).

Belongs to the small heat shock protein (HSP20) family.

Its function is as follows. Not known. This protein is one of the major immune reactive proteins in mycobacteria. The protein is 18 kDa antigen 1 of Mycobacterium avium.